A 99-amino-acid polypeptide reads, in one-letter code: Acylphosphatase (99 aa).

Residues 11 to 97 enclose the Acylphosphatase-like domain; sequence ARRIHVKGKV…VVAQGFTQKP (87 aa). Catalysis depends on residues R26 and N44.

The protein belongs to the acylphosphatase family.

The catalysed reaction is an acyl phosphate + H2O = a carboxylate + phosphate + H(+). This is Acylphosphatase (acyP) from Rhizorhabdus wittichii (strain DSM 6014 / CCUG 31198 / JCM 15750 / NBRC 105917 / EY 4224 / RW1) (Sphingomonas wittichii).